The chain runs to 345 residues: Beta-2-glycoprotein 1 (345 aa).

The first 19 residues, 1 to 19 (MISLGLILFSSVLCHVATA), serve as a signal peptide directing secretion. Sushi domains follow at residues 21–81 (RTCP…RCIP), 82–139 (RVCP…VCTR), 140–202 (VTCP…ECRE), and 203–262 (VKCP…SCKA). 11 cysteine pairs are disulfide-bonded: Cys-23–Cys-66, Cys-51–Cys-79, Cys-84–Cys-124, Cys-110–Cys-137, Cys-142–Cys-188, Cys-174–Cys-200, Cys-205–Cys-248, Cys-234–Cys-260, Cys-264–Cys-315, Cys-300–Cys-325, and Cys-307–Cys-345. O-linked (GalNAc...) threonine glycosylation is present at Thr-33. 4 N-linked (GlcNAc...) asparagine glycosylation sites follow: Asn-117, Asn-162, Asn-183, and Asn-193. The N-linked (GlcNAc...) asparagine glycan is linked to Asn-253. The tract at residues 263–345 (SCKLSVKKAT…KTDASDVKPC (83 aa)) is sushi-like.

In terms of tissue distribution, expressed by the liver and secreted in plasma.

It is found in the secreted. Functionally, binds to various kinds of negatively charged substances such as heparin, phospholipids, and dextran sulfate. May prevent activation of the intrinsic blood coagulation cascade by binding to phospholipids on the surface of damaged cells. This chain is Beta-2-glycoprotein 1 (APOH), found in Canis lupus familiaris (Dog).